The chain runs to 361 residues: Histidinol-phosphate aminotransferase (361 aa).

Lys221 carries the post-translational modification N6-(pyridoxal phosphate)lysine.

The protein belongs to the class-II pyridoxal-phosphate-dependent aminotransferase family. Histidinol-phosphate aminotransferase subfamily. Pyridoxal 5'-phosphate serves as cofactor.

It catalyses the reaction L-histidinol phosphate + 2-oxoglutarate = 3-(imidazol-4-yl)-2-oxopropyl phosphate + L-glutamate. It functions in the pathway amino-acid biosynthesis; L-histidine biosynthesis; L-histidine from 5-phospho-alpha-D-ribose 1-diphosphate: step 7/9. In Methanocella arvoryzae (strain DSM 22066 / NBRC 105507 / MRE50), this protein is Histidinol-phosphate aminotransferase.